A 225-amino-acid chain; its full sequence is MSLPEPLLRADWPRERLLRHGAATLSDPELLALALRTGVAGCNAVQLGHDLLRRFGGLRGLLGTSPAELQVVPGLGTAKACVLAAVLELARRTLEEDLVRQDALANPDLVRRYCQAALGHRKVEHCIALYLDARLKLIICAEVARGTLTQAQIYPREIVREALRHHAAALILTHNHPGGTAAASAADIAMTRQIRQALALIDVRLIDHVIVAGAATVSMAAQGHL.

The 123-residue stretch at 103–225 folds into the MPN domain; the sequence is ALANPDLVRR…TVSMAAQGHL (123 aa). 3 residues coordinate Zn(2+): histidine 174, histidine 176, and aspartate 187. The JAMM motif signature appears at 174 to 187; sequence HNHPGGTAAASAAD.

It belongs to the UPF0758 family.

In Bordetella pertussis (strain Tohama I / ATCC BAA-589 / NCTC 13251), this protein is UPF0758 protein BP1235.